We begin with the raw amino-acid sequence, 320 residues long: MNLKAITLMQFDSNGRLRHLLTLEGLSRHTLLQLLDCAAQNCALGVDPMGKRNVLAGMAVCTLFFEPSTRTRHSFHLAAQRLGADVLNFDASMSSTSKGESACDTLKNLEAMGVRGFIVRHPEEIVIAQLAAVVGEGTVLINAGAGRSTHPTQGLLDMLTLCQAKGNDFSKLKLLFVGDIKHSRVARSNLHALRTLGAGQIRVCGPTALLPHDGLLSGCVVSQDFDAMLEGVDVLMMLRLQRERMEEGLVPSLEHYHANYGLTAARLARAAPDAVVLHPGPINRGVEITDEVADGPQSWILRQASNGVMVRMAVLETLLG.

Residues R70 and T71 each coordinate carbamoyl phosphate. Position 98 (K98) interacts with L-aspartate. Carbamoyl phosphate is bound by residues R120, H150, and Q153. 2 residues coordinate L-aspartate: R184 and R239. Carbamoyl phosphate contacts are provided by G280 and P281.

The protein belongs to the aspartate/ornithine carbamoyltransferase superfamily. ATCase family. Heterododecamer (2C3:3R2) of six catalytic PyrB chains organized as two trimers (C3), and six regulatory PyrI chains organized as three dimers (R2).

The enzyme catalyses carbamoyl phosphate + L-aspartate = N-carbamoyl-L-aspartate + phosphate + H(+). It participates in pyrimidine metabolism; UMP biosynthesis via de novo pathway; (S)-dihydroorotate from bicarbonate: step 2/3. In terms of biological role, catalyzes the condensation of carbamoyl phosphate and aspartate to form carbamoyl aspartate and inorganic phosphate, the committed step in the de novo pyrimidine nucleotide biosynthesis pathway. In Xylella fastidiosa (strain Temecula1 / ATCC 700964), this protein is Aspartate carbamoyltransferase catalytic subunit.